Here is a 60-residue protein sequence, read N- to C-terminus: uncharacterized protein (60 aa).

This is an uncharacterized protein from Autographa californica nuclear polyhedrosis virus (AcMNPV).